We begin with the raw amino-acid sequence, 284 residues long: Polyamine aminopropyltransferase (284 aa).

The region spanning 2 to 237 is the PABS domain; it reads ELWYTEKHTE…GHWLFGFASK (236 aa). Q31 contacts S-methyl-5'-thioadenosine. Spermidine is bound by residues H62 and D86. Residues E106 and 137-138 contribute to the S-methyl-5'-thioadenosine site; that span reads DG. The active-site Proton acceptor is the D155. 155-158 serves as a coordination point for spermidine; it reads DSTD. S-methyl-5'-thioadenosine is bound at residue P162.

The protein belongs to the spermidine/spermine synthase family. Homodimer or homotetramer.

The protein resides in the cytoplasm. The enzyme catalyses S-adenosyl 3-(methylsulfanyl)propylamine + putrescine = S-methyl-5'-thioadenosine + spermidine + H(+). It participates in amine and polyamine biosynthesis; spermidine biosynthesis; spermidine from putrescine: step 1/1. Functionally, catalyzes the irreversible transfer of a propylamine group from the amino donor S-adenosylmethioninamine (decarboxy-AdoMet) to putrescine (1,4-diaminobutane) to yield spermidine. The sequence is that of Polyamine aminopropyltransferase from Clostridium botulinum (strain Eklund 17B / Type B).